Here is a 308-residue protein sequence, read N- to C-terminus: GTP cyclohydrolase FolE2 (308 aa).

The protein belongs to the GTP cyclohydrolase IV family.

It carries out the reaction GTP + H2O = 7,8-dihydroneopterin 3'-triphosphate + formate + H(+). The protein operates within cofactor biosynthesis; 7,8-dihydroneopterin triphosphate biosynthesis; 7,8-dihydroneopterin triphosphate from GTP: step 1/1. In terms of biological role, converts GTP to 7,8-dihydroneopterin triphosphate. The sequence is that of GTP cyclohydrolase FolE2 from Idiomarina loihiensis (strain ATCC BAA-735 / DSM 15497 / L2-TR).